The following is a 304-amino-acid chain: Rhodopsin (304 aa).

Over 1–13 (YEYPQYYLVNPAA) the chain is Extracellular. Residues 14–38 (YAALGAYMFLLILVGFPINFLTLYV) form a helical membrane-spanning segment. At 39–50 (TIEHKKLRTPLN) the chain is on the cytoplasmic side. Residues 51-73 (YILLNLAVANLFMVFGGFTTTMF) traverse the membrane as a helical segment. At 74 to 87 (TSIRGYFVLGHLGC) the chain is on the extracellular side. Cys-87 and Cys-164 are oxidised to a cystine. A helical transmembrane segment spans residues 88–110 (NLEGFFATLSGEIALWSLVVLAI). The 'Ionic lock' involved in activated form stabilization motif lies at 111–113 (ERW). Residues 111-129 (ERWVVVCKPISNFRFGENH) are Cytoplasmic-facing. A helical membrane pass occupies residues 130–150 (AIMGLAFTWTMAMACAAPPLV). Topologically, residues 151-179 (GWSRYIPEGMQCSCGIDYYTRAEGFNNES) are extracellular. Residue Asn-177 is glycosylated (N-linked (GlcNAc...) asparagine). Residues 180–201 (FVVYMFTCHFMTPLTIVFFCYG) form a helical membrane-spanning segment. At 202 to 229 (RLLCAVKEAAAAQQESETTQRAEREVTR) the chain is on the cytoplasmic side. Residues 230–251 (MVVIMVIAFLICWCPYAGVAWF) form a helical membrane-spanning segment. Over 252-263 (IFTHQGSEFGPV) the chain is Extracellular. A helical membrane pass occupies residues 264–285 (FMTIPAFFAKSSSIYNPMIYIC). Residue Lys-273 is modified to N6-(retinylidene)lysine. At 286–304 (LNKQFRHCMITTLCCGKKA) the chain is on the cytoplasmic side. S-palmitoyl cysteine attachment occurs at residues Cys-299 and Cys-300.

It belongs to the G-protein coupled receptor 1 family. Opsin subfamily. Phosphorylated on some or all of the serine and threonine residues present in the C-terminal region. Post-translationally, contains one covalently linked retinal chromophore.

It is found in the membrane. The protein localises to the cell projection. Its subcellular location is the cilium. The protein resides in the photoreceptor outer segment. Its function is as follows. Photoreceptor required for image-forming vision at low light intensity. While most salt water fish species use retinal as chromophore, most freshwater fish use 3-dehydroretinal, or a mixture of retinal and 3-dehydroretinal. Light-induced isomerization of 11-cis to all-trans retinal triggers a conformational change that activates signaling via G-proteins. Subsequent receptor phosphorylation mediates displacement of the bound G-protein alpha subunit by arrestin and terminates signaling. This chain is Rhodopsin (rho), found in Ictalurus punctatus (Channel catfish).